The primary structure comprises 127 residues: Mediator of RNA polymerase II transcription subunit 31 (127 aa).

It belongs to the Mediator complex subunit 31 family. As to quaternary structure, component of the Mediator complex, which is composed of at least 21 subunits that form three structurally distinct submodules. The Mediator head module contains MED6, MED8, MED11, SRB4/MED17, SRB5/MED18, ROX3/MED19, SRB2/MED20 and SRB6/MED22, the middle module contains MED1, MED4, NUT1/MED5, MED7, CSE2/MED9, NUT2/MED10, SRB7/MED21 and SOH1/MED31, and the tail module contains MED2, PGD1/MED3, RGR1/MED14, GAL11/MED15 and SIN4/MED16. The head and the middle modules interact directly with RNA polymerase II, whereas the elongated tail module interacts with gene-specific regulatory proteins.

It is found in the nucleus. In terms of biological role, component of the Mediator complex, a coactivator involved in the regulated transcription of nearly all RNA polymerase II-dependent genes. Mediator functions as a bridge to convey information from gene-specific regulatory proteins to the basal RNA polymerase II transcription machinery. The Mediator complex, having a compact conformation in its free form, is recruited to promoters by direct interactions with regulatory proteins and serves for the assembly of a functional preinitiation complex with RNA polymerase II and the general transcription factors. The Mediator complex unfolds to an extended conformation and partially surrounds RNA polymerase II, specifically interacting with the unphosphorylated form of the C-terminal domain (CTD) of RNA polymerase II. The Mediator complex dissociates from the RNA polymerase II holoenzyme and stays at the promoter when transcriptional elongation begins. In Saccharomyces cerevisiae (strain ATCC 204508 / S288c) (Baker's yeast), this protein is Mediator of RNA polymerase II transcription subunit 31 (SOH1).